A 504-amino-acid polypeptide reads, in one-letter code: Glycerol kinase (504 aa).

Residue T14 coordinates ADP. 3 residues coordinate ATP: T14, T15, and S16. Residue T14 participates in sn-glycerol 3-phosphate binding. Residue R18 participates in ADP binding. 4 residues coordinate sn-glycerol 3-phosphate: R84, E85, Y136, and D246. Glycerol is bound by residues R84, E85, Y136, D246, and Q247. T268 and G311 together coordinate ADP. Residues T268, G311, Q315, and G412 each contribute to the ATP site. G412 and N416 together coordinate ADP.

Belongs to the FGGY kinase family.

It catalyses the reaction glycerol + ATP = sn-glycerol 3-phosphate + ADP + H(+). Its pathway is polyol metabolism; glycerol degradation via glycerol kinase pathway; sn-glycerol 3-phosphate from glycerol: step 1/1. Inhibited by fructose 1,6-bisphosphate (FBP). In terms of biological role, key enzyme in the regulation of glycerol uptake and metabolism. Catalyzes the phosphorylation of glycerol to yield sn-glycerol 3-phosphate. This Aliivibrio fischeri (strain ATCC 700601 / ES114) (Vibrio fischeri) protein is Glycerol kinase.